Reading from the N-terminus, the 685-residue chain is Putative mannosyltransferase YycA (685 aa).

Transmembrane regions (helical) follow at residues 6–26, 68–88, 109–129, 154–174, 176–196, and 204–224; these read FDAALILILLAAAFLNTYHIW, VLWIQTIFALIFGVHTWSVII, FGVGAARIAALVMALTPIAVA, AVKQGKLVWLLTAFALIGLAF, MKMMQAFMVLPAFVLFYLIAS, and IGSLLLSLVLLTGLSLSWAIA. Residues 269-347 form a disordered region; that stretch reads MNAAGGGNMQ…GGGGGKSVNM (79 aa). Over residues 277-286 the composition is skewed to polar residues; it reads MQNQDNMQAP. Over residues 287–303 the composition is skewed to low complexity; sequence NGNGSSFSQNGNQSFGN. Residues 318-343 are compositionally biased toward gly residues; it reads LNGGGGTPPTGGNGPGNGGPGGGGGK. A run of 7 helical transmembrane segments spans residues 363-383, 399-419, 422-442, 455-475, 479-499, 513-533, and 573-593; these read LSGQISWMLPFSLIGLLGAII, TLFWAAWLVPVAGFFSIAGFF, YYLIMLAPPIAALSGIGWYTM, YLLPAAVLITAVFQVYILSAY, IGSVWMYVLGLLGLGITLALL, IISLCVLLLTPVYWSATPLLY, and TGEEYLFATLTTVTAAPYIIY. The tract at residues 652-685 is disordered; that stretch reads TSDEYSGSSSSTNSVQGMRRGPGGESQQTLYLVE. A compositionally biased stretch (low complexity) spans 654 to 665; it reads DEYSGSSSSTNS. A compositionally biased stretch (polar residues) spans 676–685; the sequence is ESQQTLYLVE.

The protein belongs to the glycosyltransferase 39 family.

It is found in the cell membrane. This Bacillus subtilis (strain 168) protein is Putative mannosyltransferase YycA (yycA).